The following is a 288-amino-acid chain: ATP synthase gamma chain (288 aa).

The protein belongs to the ATPase gamma chain family. As to quaternary structure, F-type ATPases have 2 components, CF(1) - the catalytic core - and CF(0) - the membrane proton channel. CF(1) has five subunits: alpha(3), beta(3), gamma(1), delta(1), epsilon(1). CF(0) has three main subunits: a, b and c.

The protein resides in the cell inner membrane. In terms of biological role, produces ATP from ADP in the presence of a proton gradient across the membrane. The gamma chain is believed to be important in regulating ATPase activity and the flow of protons through the CF(0) complex. This Blochmanniella pennsylvanica (strain BPEN) protein is ATP synthase gamma chain.